We begin with the raw amino-acid sequence, 873 residues long: DNA helicase/primase complex-associated protein (873 aa).

The disordered stretch occupies residues 394-422 (PPLPRDDGDGENNVVEVSSSTGGAHPPSD).

Belongs to the herpesviridae HEPA family. As to quaternary structure, associates with the primase and the helicase to form the helicase-primase complex. Interacts with the origin-binding protein. Interacts with the polymerase catalytic subunit.

The protein localises to the host nucleus. Functionally, component of the helicase/primase complex. Unwinds the DNA at the replication forks and generates single-stranded DNA for both leading and lagging strand synthesis. The primase synthesizes short RNA primers on the lagging strand that the polymerase presumably elongates using dNTPs. The primase-associated factor has no known catalytic activity in the complex and may serve to facilitate the formation of the replisome by directly interacting with the origin-binding protein and the polymerase. The sequence is that of DNA helicase/primase complex-associated protein (UL102) from Homo sapiens (Human).